A 138-amino-acid chain; its full sequence is Small ribosomal subunit protein uS11c (138 aa).

The disordered stretch occupies residues 1–22 (MTKPIPRIGSRRNGRIGSRKNA). Basic residues predominate over residues 9–22 (GSRRNGRIGSRKNA).

Belongs to the universal ribosomal protein uS11 family. As to quaternary structure, part of the 30S ribosomal subunit.

It localises to the plastid. Its subcellular location is the chloroplast. This is Small ribosomal subunit protein uS11c from Dioscorea elephantipes (Elephant's foot yam).